The sequence spans 107 residues: Protein TAP1 (107 aa).

The N-terminal stretch at 1 to 23 (MESKRVDVLVGLMLIMAIFGVHS) is a signal peptide.

In terms of tissue distribution, stamen.

This chain is Protein TAP1 (TAP1), found in Antirrhinum majus (Garden snapdragon).